Consider the following 186-residue polypeptide: UPF0340 protein M6_Spy1622 (186 aa).

The protein belongs to the UPF0340 family.

The polypeptide is UPF0340 protein M6_Spy1622 (Streptococcus pyogenes serotype M6 (strain ATCC BAA-946 / MGAS10394)).